The chain runs to 743 residues: FHF complex subunit HOOK-interacting protein 2B (743 aa).

Residues 186–219 form a disordered region; that stretch reads CGEPTALPKDTTSHGDKDCSHDGAPARPQLDGES. The segment covering 196–206 has biased composition (basic and acidic residues); it reads TTSHGDKDCSH.

Belongs to the FHIP family. In terms of tissue distribution, expressed in liver.

Functionally, able to activate MAPK/ERK and TGFB signaling pathways. May regulate the activity of genes involved in intestinal barrier function and immunoprotective inflammation. May play a role in cell proliferation. This is FHF complex subunit HOOK-interacting protein 2B from Homo sapiens (Human).